Consider the following 261-residue polypeptide: Pyrroline-5-carboxylate reductase (261 aa).

The protein belongs to the pyrroline-5-carboxylate reductase family.

The protein resides in the cytoplasm. The catalysed reaction is L-proline + NADP(+) = (S)-1-pyrroline-5-carboxylate + NADPH + 2 H(+). It catalyses the reaction L-proline + NAD(+) = (S)-1-pyrroline-5-carboxylate + NADH + 2 H(+). Its pathway is amino-acid biosynthesis; L-proline biosynthesis; L-proline from L-glutamate 5-semialdehyde: step 1/1. Functionally, catalyzes the reduction of 1-pyrroline-5-carboxylate (PCA) to L-proline. The polypeptide is Pyrroline-5-carboxylate reductase (Thermus thermophilus (strain ATCC BAA-163 / DSM 7039 / HB27)).